The sequence spans 268 residues: Cyclohexadienyl dehydratase (268 aa).

The N-terminal stretch at 1-25 is a signal peptide; sequence MPKSFRHLVQALACLALLASASLQA.

Belongs to the bacterial solute-binding protein 3 family. In terms of assembly, homodimer.

It is found in the periplasm. The enzyme catalyses prephenate + H(+) = 3-phenylpyruvate + CO2 + H2O. The catalysed reaction is L-arogenate + H(+) = L-phenylalanine + CO2 + H2O. Its pathway is amino-acid biosynthesis; L-phenylalanine biosynthesis; L-phenylalanine from L-arogenate: step 1/1. The protein operates within amino-acid biosynthesis; L-phenylalanine biosynthesis; phenylpyruvate from prephenate: step 1/1. Its function is as follows. Forms alternative pathway for phenylalanine biosynthesis. Can catalyze two reactions: prephenate dehydratase and arogenate dehydratase. May have a role in chemotaxis or transport. The chain is Cyclohexadienyl dehydratase (pheC) from Pseudomonas aeruginosa (strain ATCC 15692 / DSM 22644 / CIP 104116 / JCM 14847 / LMG 12228 / 1C / PRS 101 / PAO1).